Reading from the N-terminus, the 61-residue chain is Conotoxin Am14.1 (61 aa).

2 consecutive propeptides follow at residues 1–19 (MLSV…HLPR) and 52–61 (KRDLDLFTDQ).

In terms of processing, mostly non-hydroxylated. Post-translationally, contains 2 disulfide bonds. Expressed by the venom duct.

It is found in the secreted. Functionally, probable toxin that inhibits ion channels. The chain is Conotoxin Am14.1 from Conus amadis (Amadis cone).